The sequence spans 147 residues: UPF0306 protein YhbP (147 aa).

Belongs to the UPF0306 family.

This is UPF0306 protein YhbP from Escherichia coli O7:K1 (strain IAI39 / ExPEC).